Reading from the N-terminus, the 131-residue chain is Inner membrane protein YecN (131 aa).

Topologically, residues 1-107 (MVSALYAVLS…RWRRSGMSAT (107 aa)) are cytoplasmic. Residues 108–128 (WCALLLMVLANLWYMPWELVF) form a helical membrane-spanning segment. The Periplasmic portion of the chain corresponds to 129-131 (SLR).

The protein localises to the cell inner membrane. This Escherichia coli O6:H1 (strain CFT073 / ATCC 700928 / UPEC) protein is Inner membrane protein YecN (yecN).